The following is a 429-amino-acid chain: CBL-interacting serine/threonine-protein kinase 7 (429 aa).

One can recognise a Protein kinase domain in the interval 25 to 280 (YELGRRLGSG…IETVMKTNWF (256 aa)). Residues 31 to 39 (LGSGSFAKV) and K54 each bind ATP. The active-site Proton acceptor is D149. The interval 167–195 (DFGLSALPEHLQNGLLHTACGTPAYTAPE) is activation loop. At S171 the chain carries Phosphoserine. T184 carries the phosphothreonine modification. An NAF domain is found at 302–326 (SSVNSITAFDLISLSSGLDLSGLFE). The tract at residues 330 to 363 (KKERRFTAKVSGVEVEEKAKMIGEKLGYVVKKKM) is PPI.

Belongs to the protein kinase superfamily. CAMK Ser/Thr protein kinase family. SNF1 subfamily. Interacts with CBL1, CBL2 and CBL3. The cofactor is Mn(2+). Post-translationally, autophosphorylated. In terms of tissue distribution, strongly expressed in leaves, but barely expressed in roots, stems or flowers.

It catalyses the reaction L-seryl-[protein] + ATP = O-phospho-L-seryl-[protein] + ADP + H(+). The enzyme catalyses L-threonyl-[protein] + ATP = O-phospho-L-threonyl-[protein] + ADP + H(+). Its function is as follows. CIPK serine-threonine protein kinases interact with CBL proteins. Binding of a CBL protein to the regulatory NAF domain of CIPK protein lead to the activation of the kinase in a calcium-dependent manner. Phosphorylates the rice sucrose synthase (SuSy) in vitro in an allosteric manner. Involved in cold response. This Arabidopsis thaliana (Mouse-ear cress) protein is CBL-interacting serine/threonine-protein kinase 7 (CIPK7).